The chain runs to 704 residues: DNA ligase (704 aa).

NAD(+) contacts are provided by residues 43-47 (DADYD), 92-93 (SL), and E124. K126 serves as the catalytic N6-AMP-lysine intermediate. Positions 147, 182, 298, and 322 each coordinate NAD(+). Zn(2+) contacts are provided by C427, C430, C445, and C451. The BRCT domain maps to 625–704 (PVASPVAGKI…DGWLRLIGDA (80 aa)).

The protein belongs to the NAD-dependent DNA ligase family. LigA subfamily. Requires Mg(2+) as cofactor. Mn(2+) serves as cofactor.

It catalyses the reaction NAD(+) + (deoxyribonucleotide)n-3'-hydroxyl + 5'-phospho-(deoxyribonucleotide)m = (deoxyribonucleotide)n+m + AMP + beta-nicotinamide D-nucleotide.. Its function is as follows. DNA ligase that catalyzes the formation of phosphodiester linkages between 5'-phosphoryl and 3'-hydroxyl groups in double-stranded DNA using NAD as a coenzyme and as the energy source for the reaction. It is essential for DNA replication and repair of damaged DNA. The chain is DNA ligase from Cereibacter sphaeroides (strain ATCC 17029 / ATH 2.4.9) (Rhodobacter sphaeroides).